The sequence spans 334 residues: Type II methyltransferase M.NlaIII (334 aa).

Belongs to the N(4)/N(6)-methyltransferase family.

It catalyses the reaction a 2'-deoxyadenosine in DNA + S-adenosyl-L-methionine = an N(6)-methyl-2'-deoxyadenosine in DNA + S-adenosyl-L-homocysteine + H(+). In terms of biological role, a methylase, recognizes the double-stranded sequence 5'-CATG-3', methylates A-2 on both strands and protects the DNA from cleavage by the NlaIII endonuclease. This chain is Type II methyltransferase M.NlaIII (nlaIIIM), found in Neisseria lactamica.